Consider the following 237-residue polypeptide: uncharacterized protein (237 aa).

The first 28 residues, 1–28 (MNRPLLSVAGSLFVAAWALYIFSCFQHG), serve as a signal peptide directing secretion. Residues 52–96 (NARDTAAHPSDTADNTSGSSTTTDPRSHGNAPPAPVGGAAQTHTQ) form a disordered region. Positions 63-75 (TADNTSGSSTTTD) are enriched in polar residues.

This is an uncharacterized protein from Treponema pallidum (strain Nichols).